The primary structure comprises 1013 residues: Retinoblastoma-related protein 1 (1013 aa).

The domain A stretch occupies residues 406–607 (TPVSTAMTTA…EKGSSMYNSL (202 aa)). The segment at 406–858 (TPVSTAMTTA…NEIFIPAVKP (453 aa)) is pocket. The interval 608–727 (IVARPSLALE…PGGGGETCAE (120 aa)) is spacer. A domain B region spans residues 728–858 (TGINIFFTKI…NEIFIPAVKP (131 aa)). 2 positions are modified to phosphoserine: Ser885 and Ser898. Residues 979–1013 (VANSLNLQNQNQNQNGSDASSSGGAAPLKTEPTDS) form a disordered region. The span at 980-1004 (ANSLNLQNQNQNQNGSDASSSGGAA) shows a compositional bias: low complexity.

Belongs to the retinoblastoma protein (RB) family. In terms of assembly, interacts with the begomovirus replication-associated protein (Rep), the nanovirus Clink protein, the mastrevirus RepA protein, E2FA, E2FB and E2FC. Interacts with MSI1 through its Domain A. Interacts with ATPK1/S6K1. Interacts with SCR. Interacts with HAT2. Interacts with FAMA. Interacts with MYB124 and MYB88. Component of a DREAM-like complex which modulates a variety of developmentally regulated genes and of the mitotic genes in proliferating and differentiated cells. Associates with MYB3R3 in both earlier and later stages of leaves development. Interacts with MYB3R4 only at early stages of leaves development. Highly phosphorylated by CDKA-1 during G1 to S phase transition. Once hyper-phosphorylated, becomes inactive and unable to interact with E2F. Post-translationally, ubiquitinated. Subject to proteasome-dependent degradation during sucrose starvation. Expressed in actively dividing cells. Detected in the shoot apical meristem, in young leaf primordia and in both sporophytic tissue and the megagametophyte.

The protein resides in the nucleus. Its function is as follows. Key regulator of entry into cell division. Acts as a transcription repressor of E2F target genes, whose activity is required for progress from the G1 to the S phase of the cell cycle. Hyperphosphorylation by CDKA-1 prevents the binding to E2F transcription factors, allowing G1 to S phase transition to operate. Forms a stable complex with E2FA that functions in maintaining cell proliferation through repression of cell differentiation. Plays a central role in the mechanism controlling meristem cell differentiation, cell fate establishment and cell fate maintenance during organogenesis and gametogenesis. Required during lateral organ production. Also involved in controlling asymmetric divisions of stem cells in different stem cell niches. Acts as a negative regulator of cell proliferation during leaf and gametophytes development. At later stages of development, restricts the progression through additional endocycles. In the leaf, plays a role in the control of the mesophyll differentiation. Another role is its implication in the regulation of imprinted genes. Acts together with MSI1 to repress the expression of MET1 during gametogenesis. This in turn activates expression of the imprinted genes FIS2 and FWA. Regulates many genes of the polycomb repressive complex 2 (PRC2). Plays an important role in meiosis affecting different aspects of this complex process. Functions as a positive regulator of the developmental switch from embryonic heterotrophic growth to autotrophic growth. Interaction with mastrevirus RepA or nanovirus Clink protein disrupts the RBR/E2F interaction and releases the transcription of replicative enzymes needed by the virus by increasing the E2F DNA-binding activity. The polypeptide is Retinoblastoma-related protein 1 (RBR1) (Arabidopsis thaliana (Mouse-ear cress)).